The following is a 759-amino-acid chain: 5-methyltetrahydropteroyltriglutamate--homocysteine methyltransferase (759 aa).

Over residues 1-16 (MTQPVRRQPFTATITG) the composition is skewed to polar residues. The disordered stretch occupies residues 1–22 (MTQPVRRQPFTATITGSPRIGP). Residues 24 to 27 (RELK) and Lys118 each bind 5-methyltetrahydropteroyltri-L-glutamate. Residues 437–439 (IGS) and Glu490 contribute to the L-homocysteine site. L-methionine-binding positions include 437 to 439 (IGS) and Glu490. Residues 521–522 (RC) and Trp567 each bind 5-methyltetrahydropteroyltri-L-glutamate. Asp605 provides a ligand contact to L-homocysteine. L-methionine is bound at residue Asp605. Position 611 (Glu611) interacts with 5-methyltetrahydropteroyltri-L-glutamate. His647, Cys649, and Glu671 together coordinate Zn(2+). His700 acts as the Proton donor in catalysis. Cys732 provides a ligand contact to Zn(2+).

The protein belongs to the vitamin-B12 independent methionine synthase family. Requires Zn(2+) as cofactor.

It carries out the reaction 5-methyltetrahydropteroyltri-L-glutamate + L-homocysteine = tetrahydropteroyltri-L-glutamate + L-methionine. The protein operates within amino-acid biosynthesis; L-methionine biosynthesis via de novo pathway; L-methionine from L-homocysteine (MetE route): step 1/1. Catalyzes the transfer of a methyl group from 5-methyltetrahydrofolate to homocysteine resulting in methionine formation. In Mycobacterium tuberculosis (strain ATCC 25177 / H37Ra), this protein is 5-methyltetrahydropteroyltriglutamate--homocysteine methyltransferase.